Here is a 391-residue protein sequence, read N- to C-terminus: Trehalose-phosphate phosphatase (391 aa).

The active-site Nucleophile is the Asp147. Mg(2+) contacts are provided by Asp147, Asp149, and Asp330. 147 to 149 (DFD) is a substrate binding site.

The protein belongs to the trehalose phosphatase family. Mg(2+) serves as cofactor.

It catalyses the reaction alpha,alpha-trehalose 6-phosphate + H2O = alpha,alpha-trehalose + phosphate. The protein operates within glycan biosynthesis; trehalose biosynthesis. In terms of biological role, removes the phosphate from trehalose 6-phosphate to produce free trehalose. This Mycolicibacterium paratuberculosis (strain ATCC BAA-968 / K-10) (Mycobacterium paratuberculosis) protein is Trehalose-phosphate phosphatase (otsB).